Here is a 612-residue protein sequence, read N- to C-terminus: Probable exonuclease subunit 2 (612 aa).

35–42 (GGNGLGKS) lines the ATP pocket. Coiled-coil stretches lie at residues 163 to 193 (NQEQ…GQMA) and 288 to 459 (SRAS…VADL).

To phage T4 protein GP46. Could consist of two subunits: D13 and D12.

Possible exonuclease that may play a role in viral genome replication, DNA recombination, and host DNA degradation. The protein is Probable exonuclease subunit 2 (D13) of Escherichia phage T5 (Enterobacteria phage T5).